Consider the following 452-residue polypeptide: Phosphoglucosamine mutase (452 aa).

The active-site Phosphoserine intermediate is Ser-104. Mg(2+) is bound by residues Ser-104, Asp-246, Asp-248, and Asp-250. Ser-104 carries the phosphoserine modification.

The protein belongs to the phosphohexose mutase family. Mg(2+) serves as cofactor. In terms of processing, activated by phosphorylation.

The catalysed reaction is alpha-D-glucosamine 1-phosphate = D-glucosamine 6-phosphate. Catalyzes the conversion of glucosamine-6-phosphate to glucosamine-1-phosphate. The sequence is that of Phosphoglucosamine mutase from Streptomyces griseus subsp. griseus (strain JCM 4626 / CBS 651.72 / NBRC 13350 / KCC S-0626 / ISP 5235).